The primary structure comprises 313 residues: Solute carrier family 35 member E3 (313 aa).

Transmembrane regions (helical) follow at residues 17 to 37 (GLLFNLLVSICIVFLNKWIYV), 40 to 60 (GFPNMSLTLVHFVVTWLGLYI), 71 to 91 (SLPLSKLLLLALSFCGFVVFT), 126 to 146 (FSVRIQLTLIPITVGVILNSY), 154 to 174 (LGMVFAALGVVVTSLYQVWVG), 187 to 206 (LLYYQAPMSSAMLLVAVPFF), 225 to 245 (LMVLLSGIIAFMVNLSIYWII), 252 to 272 (TYNMFGHFKFCITLCGGYILF), and 275 to 295 (PLSVNQGLGILCTLFGILTYT).

This sequence belongs to the TPT transporter family. SLC35E subfamily.

It is found in the membrane. Putative transporter. This Mus musculus (Mouse) protein is Solute carrier family 35 member E3 (Slc35e3).